The chain runs to 647 residues: MPLPAFVAAAARLAVLVAAAATAANAASYARYRRRHLRRIPSPIDESADPLADFRAFPSSDADDSEEDNFFFGLATAPAHVEDRLEDAWLQFATETSCDDNGNVRDQRPVDALMASAAGDGGSQQSWRSTGGENIGDREQRKPLRVAMEAMLRGFEILAESGESAGGDNCSHNVAAWHNVPCPQERLRFWSDPDAELKLAKETGISVFRMGVDWARLMPEEPTEELKSSVNFAALERYRWIIQRVREYGMKVMLTLFHHSLPPWAGKYGGWKMEKTVTYFMDFVRLVVDRVSNLVDYWVIFNEPHVFVMLTYCAGAWPGGDPNAIEVATSTLPTGVYNQALHWMAIAHSEAYDYIHSKSKNERKPIVGVAHHVSFTRPYGLFDVAAVALANSLTLFPYVDSICDKLDFIGINYYGQEVISGPGLKLVDNDEYSESGRGVYPDGLFRILIQFNERYKRLNIPFVITENGVSDETDLIRKPYILEHLLATYAAIIMGVRVLGYLFWTTSDNWEWADGYGPKFGLVAVDRANNLARKPRPSYFLFSRVVTTGKITRQDRMSAWRELQQAAVQKKTRPFFRAVDKHGRMYAGGLDRPIQRPFILRDWRFGHYKMEGLQDPLSCFIRCIFAPFSRQKKIHYIEDDVISYSIN.

Residues 116–140 form a disordered region; sequence SAAGDGGSQQSWRSTGGENIGDREQ. Residues 123–132 show a composition bias toward polar residues; sequence SQQSWRSTGG. N169 is a glycosylation site (N-linked (GlcNAc...) asparagine). A beta-D-glucoside is bound by residues H258, 302–303, Y414, E466, W504, 511–512, and F520; these read NE and EW. E303 (proton donor) is an active-site residue. E466 functions as the Nucleophile in the catalytic mechanism.

This sequence belongs to the glycosyl hydrolase 1 family.

The protein localises to the plastid. It is found in the chloroplast outer membrane. The enzyme catalyses 2 a 1,2-diacyl-3-O-(beta-D-galactosyl)-sn-glycerol = a 1,2-diacyl-3-O-[beta-D-galactosyl-(1-&gt;6)-beta-D-galactosyl]-sn-glycerol + a 1,2-diacyl-sn-glycerol. Galactosyltransferase synthesizing digalactosyldiacylglycerol from monogalactosyldiacylglycerol in the absence of UDP-galactose. Potentially involved in freezing tolerance. In Oryza sativa subsp. japonica (Rice), this protein is Beta-glucosidase-like SFR2, chloroplastic.